The sequence spans 783 residues: Galactinol--sucrose galactosyltransferase (783 aa).

This sequence belongs to the glycosyl hydrolases 36 family.

The enzyme catalyses alpha-D-galactosyl-(1-&gt;3)-1D-myo-inositol + sucrose = raffinose + myo-inositol. With respect to regulation, inhibited by Ag(2)+, Hg(2+), Zn(2+), p-chloromercuribenzoate (pCMB) and 1-deoxygalactonojirimycin. Functionally, transglycosidase operating by a ping-pong reaction mechanism. Involved in the synthesis of raffinose, a major soluble carbohydrate in seeds, roots and tubers. Specific for galactinol and p-nitrophenyl-alpha-D-galactoside as galactosyl donors. Able to utilize sucrose, lactose, 4-beta-galactobiose, N-acetyl-D-lactosamine, trehalose and lacto-N-biose as acceptors. May also act as a glycoside hydrolase. This is Galactinol--sucrose galactosyltransferase (RFS) from Oryza sativa subsp. japonica (Rice).